The sequence spans 211 residues: Large ribosomal subunit protein uL3 (211 aa).

At Gln150 the chain carries N5-methylglutamine.

The protein belongs to the universal ribosomal protein uL3 family. In terms of assembly, part of the 50S ribosomal subunit. Forms a cluster with proteins L14 and L19. Methylated by PrmB.

One of the primary rRNA binding proteins, it binds directly near the 3'-end of the 23S rRNA, where it nucleates assembly of the 50S subunit. The protein is Large ribosomal subunit protein uL3 of Pseudomonas putida (strain GB-1).